Consider the following 533-residue polypeptide: NEDD8-activating enzyme E1 regulatory subunit (533 aa).

The segment at Asp330–Asn343 is interaction with uba3.

This sequence belongs to the ubiquitin-activating E1 family. ULA1 subfamily. As to quaternary structure, heterodimer of uba3 and nae1. The complex binds nedd8 and ube2m.

It participates in protein modification; protein neddylation. Its function is as follows. Regulatory subunit of the dimeric uba3-nae1 E1 enzyme. E1 activates nedd8 by first adenylating its C-terminal glycine residue with ATP, thereafter linking this residue to the side chain of the catalytic cysteine, yielding a nedd8-uba3 thioester and free AMP. E1 finally transfers nedd8 to the catalytic cysteine of ube2m. The covalent attachment of nedd8 to target proteins is known as 'neddylation' and the process is involved in the regulation of cell growth, viability and development. This Danio rerio (Zebrafish) protein is NEDD8-activating enzyme E1 regulatory subunit (nae1).